The following is a 262-amino-acid chain: ATP synthase subunit a (262 aa).

7 helical membrane passes run isoleucine 30–phenylalanine 50, tryptophan 64–glycine 84, leucine 91–glycine 111, isoleucine 123–serine 143, phenylalanine 149–isoleucine 169, leucine 195–leucine 215, and isoleucine 220–leucine 240.

It belongs to the ATPase A chain family. As to quaternary structure, F-type ATPases have 2 components, CF(1) - the catalytic core - and CF(0) - the membrane proton channel. CF(1) has five subunits: alpha(3), beta(3), gamma(1), delta(1), epsilon(1). CF(0) has three main subunits: a, b and c.

It is found in the mitochondrion inner membrane. Functionally, mitochondrial membrane ATP synthase (F(1)F(0) ATP synthase or Complex V) produces ATP from ADP in the presence of a proton gradient across the membrane which is generated by electron transport complexes of the respiratory chain. F-type ATPases consist of two structural domains, F(1) - containing the extramembraneous catalytic core and F(0) - containing the membrane proton channel, linked together by a central stalk and a peripheral stalk. During catalysis, ATP synthesis in the catalytic domain of F(1) is coupled via a rotary mechanism of the central stalk subunits to proton translocation. Key component of the proton channel; it may play a direct role in the translocation of protons across the membrane. The chain is ATP synthase subunit a (ATP6) from Allomyces macrogynus.